Consider the following 321-residue polypeptide: L-Ala-D/L-Glu epimerase (321 aa).

Substrate is bound by residues Thr-124 and Lys-149. Residue Lys-151 is the Proton acceptor; specific for (R)-substrate epimerization of the active site. Mg(2+)-binding residues include Asp-176, Glu-202, and Asp-225. Lys-247 acts as the Proton acceptor; specific for (S)-substrate epimerization in catalysis. Positions 275, 297, and 299 each coordinate substrate.

It belongs to the mandelate racemase/muconate lactonizing enzyme family. In terms of assembly, monomer. It depends on Mg(2+) as a cofactor.

The catalysed reaction is L-alanyl-L-glutamate = L-alanyl-D-glutamate. The protein operates within cell wall biogenesis; peptidoglycan recycling. Its function is as follows. Catalyzes the epimerization of L-Ala-D-Glu to L-Ala-L-Glu and has a role in the recycling of the murein peptide, of which L-Ala-D-Glu is a component. Is also able to catalyze the reverse reaction and the epimerization of all the L-Ala-X dipeptides, except L-Ala-L-Arg, L-Ala-L-Lys and L-Ala-L-Pro. Is also active with L-Gly-L-Glu, L-Phe-L-Glu, and L-Ser-L-Glu, but not with L-Glu-L-Glu, L-Lys-L-Glu, L-Pro-L-Glu, L-Lys-L-Ala, or D-Ala-D-Ala. The polypeptide is L-Ala-D/L-Glu epimerase (ycjG) (Escherichia coli (strain K12)).